Consider the following 350-residue polypeptide: Ribosomal RNA large subunit methyltransferase M (350 aa).

Residues 217–220 (APGG), Asp236, Asp256, and Asp272 each bind S-adenosyl-L-methionine. The active-site Proton acceptor is Lys301.

Belongs to the class I-like SAM-binding methyltransferase superfamily. RNA methyltransferase RlmE family. RlmM subfamily. Monomer.

The protein resides in the cytoplasm. The enzyme catalyses cytidine(2498) in 23S rRNA + S-adenosyl-L-methionine = 2'-O-methylcytidine(2498) in 23S rRNA + S-adenosyl-L-homocysteine + H(+). Functionally, catalyzes the 2'-O-methylation at nucleotide C2498 in 23S rRNA. The chain is Ribosomal RNA large subunit methyltransferase M from Cellvibrio japonicus (strain Ueda107) (Pseudomonas fluorescens subsp. cellulosa).